We begin with the raw amino-acid sequence, 1154 residues long: Polyketide biosynthesis protein ThaF (1154 aa).

The acyl transferase stretch occupies residues 330–714 (MHAFLFPGQG…TNGIAPAARV (385 aa)). The segment at 627 to 689 (SAVAASAPPR…PAPAPAPAPA (63 aa)) is disordered. Residues 641-672 (ADAQPPAASPARAATAASTMPPASASASASAP) show a composition bias toward low complexity. Pro residues predominate over residues 673 to 689 (APAPAPAPAPAPAPAPA).

This sequence in the N-terminal section; belongs to the FabD family.

The protein resides in the cytoplasm. The enzyme catalyses holo-[ACP] + malonyl-CoA = malonyl-[ACP] + CoA. Its pathway is antibiotic biosynthesis. Involved in production of the polyketide antibiotic thailandamide. Probably has an acyl transferase activity and could also have a flavin mononucleotide-dependent oxidoreductase activity. This Burkholderia thailandensis (strain ATCC 700388 / DSM 13276 / CCUG 48851 / CIP 106301 / E264) protein is Polyketide biosynthesis protein ThaF.